The primary structure comprises 238 residues: Uridylate kinase (238 aa).

10–13 (KFSG) serves as a coordination point for ATP. Residues 18-23 (GENGFG) are involved in allosteric activation by GTP. G52 is a UMP binding site. The ATP site is built by G53 and R57. Residues D73 and 134–141 (TGNPFFTT) each bind UMP. Residues T161, Y167, and D170 each contribute to the ATP site.

The protein belongs to the UMP kinase family. Homohexamer.

The protein localises to the cytoplasm. The enzyme catalyses UMP + ATP = UDP + ADP. It participates in pyrimidine metabolism; CTP biosynthesis via de novo pathway; UDP from UMP (UMPK route): step 1/1. With respect to regulation, allosterically activated by GTP. Inhibited by UTP. Catalyzes the reversible phosphorylation of UMP to UDP. The sequence is that of Uridylate kinase from Campylobacter concisus (strain 13826).